The chain runs to 358 residues: Uptake hydrogenase small subunit (358 aa).

The N-terminal stretch at 1–45 (MSDIETFYDVMRRQGITRRSFMKSVRSPQHVLGLGPSFVPKIGEA) is a signal peptide. [4Fe-4S] cluster-binding residues include Cys62, Cys65, Cys160, Cys194, His232, Cys235, Cys260, and Cys266. Positions 275, 294, and 297 each coordinate [3Fe-4S] cluster.

The protein belongs to the [NiFe]/[NiFeSe] hydrogenase small subunit family. As to quaternary structure, heterodimer of a large and a small subunit. It depends on [4Fe-4S] cluster as a cofactor. Requires [3Fe-4S] cluster as cofactor.

It is found in the cell membrane. It catalyses the reaction H2 + A = AH2. Functionally, this enzyme recycles the H(2) produced by nitrogenase to increase the production of ATP and to protect nitrogenase against inhibition or damage by O(2) under carbon- or phosphate-limited conditions. In Rhodobacter capsulatus (Rhodopseudomonas capsulata), this protein is Uptake hydrogenase small subunit (hupA).